The primary structure comprises 1342 residues: DNA-directed RNA polymerase subunit beta (1342 aa).

This sequence belongs to the RNA polymerase beta chain family. As to quaternary structure, the RNAP catalytic core consists of 2 alpha, 1 beta, 1 beta' and 1 omega subunit. When a sigma factor is associated with the core the holoenzyme is formed, which can initiate transcription.

It carries out the reaction RNA(n) + a ribonucleoside 5'-triphosphate = RNA(n+1) + diphosphate. Functionally, DNA-dependent RNA polymerase catalyzes the transcription of DNA into RNA using the four ribonucleoside triphosphates as substrates. In Tolumonas auensis (strain DSM 9187 / NBRC 110442 / TA 4), this protein is DNA-directed RNA polymerase subunit beta.